The sequence spans 60 residues: MAQIKITLTKSPIGRKPEQRKTVKALGLGKLNSSVIKEDNAAMRGMVTAISHLVTVEEVK.

The protein belongs to the universal ribosomal protein uL30 family. Part of the 50S ribosomal subunit.

This chain is Large ribosomal subunit protein uL30, found in Streptococcus uberis (strain ATCC BAA-854 / 0140J).